Reading from the N-terminus, the 501-residue chain is Glutamyl-tRNA(Gln) amidotransferase subunit A (501 aa).

Active-site charge relay system residues include Lys-80 and Ser-155. The Acyl-ester intermediate role is filled by Ser-179.

Belongs to the amidase family. GatA subfamily. As to quaternary structure, heterotrimer of A, B and C subunits.

The enzyme catalyses L-glutamyl-tRNA(Gln) + L-glutamine + ATP + H2O = L-glutaminyl-tRNA(Gln) + L-glutamate + ADP + phosphate + H(+). Allows the formation of correctly charged Gln-tRNA(Gln) through the transamidation of misacylated Glu-tRNA(Gln) in organisms which lack glutaminyl-tRNA synthetase. The reaction takes place in the presence of glutamine and ATP through an activated gamma-phospho-Glu-tRNA(Gln). In Cupriavidus necator (strain ATCC 17699 / DSM 428 / KCTC 22496 / NCIMB 10442 / H16 / Stanier 337) (Ralstonia eutropha), this protein is Glutamyl-tRNA(Gln) amidotransferase subunit A.